Consider the following 150-residue polypeptide: Developmental pluripotency-associated protein 3 (150 aa).

Over residues 1 to 22 the composition is skewed to basic and acidic residues; sequence MEEPSEKVDPMKDPETPQKKDE. The tract at residues 1–32 is disordered; the sequence is MEEPSEKVDPMKDPETPQKKDEEDALDDTDVL. A required for H3K9me2-binding region spans residues 1 to 75; it reads MEEPSEKVDP…VPVENKSEKI (75 aa). Residues 76 to 150 are required to exclude TET3 from the maternal pronucleus; it reads RREVQSAFPK…PSENAKIGKN (75 aa).

As to expression, expressed in the immature oocytes and in newborn ovaries. Subsequently detected in maturing oocytes and in preimplantation embryos. Expressed in pluripotent embryonic but not in differentiated somatic cells. Expressed in blastocysts, epiblasts, primordial germ cells, embryonic gonads and primitive spermatogonia. No expression is detected in adult testes.

It localises to the nucleus. It is found in the cytoplasm. In terms of biological role, primordial germ cell (PGCs)-specific protein involved in epigenetic chromatin reprogramming in the zygote following fertilization. In zygotes, DNA demethylation occurs selectively in the paternal pronucleus before the first cell division, while the adjacent maternal pronucleus and certain paternally-imprinted loci are protected from this process. Participates in protection of DNA methylation in the maternal pronucleus by preventing conversion of 5mC to 5hmC: specifically recognizes and binds histone H3 dimethylated at 'Lys-9' (H3K9me2) on maternal genome, and protects maternal genome from TET3-mediated conversion to 5hmC and subsequent DNA demethylation. Does not bind paternal chromatin, which is mainly packed into protamine and does not contain much H3K9me2 mark. Also protects imprinted loci that are marked with H3K9me2 in mature sperm from DNA demethylation in early embryogenesis. May be important for the totipotent/pluripotent states continuing through preimplantation development. Also involved in chromatin condensation in oocytogenesis. The protein is Developmental pluripotency-associated protein 3 (Dppa3) of Mus musculus (Mouse).